Here is a 127-residue protein sequence, read N- to C-terminus: MSQEFSRARRVGELLQRELARLFQEELKDPRVKLVTVSHVRVSPDLRQAKAYVTFLGKEEDTQEQLAVLNKAAGFLQHGLSQRVELRVIPRLQFVYDDSIERGRRLSALIDKAVQKETDGESDNSTE.

Belongs to the RbfA family. As to quaternary structure, monomer. Binds 30S ribosomal subunits, but not 50S ribosomal subunits or 70S ribosomes.

It localises to the cytoplasm. In terms of biological role, one of several proteins that assist in the late maturation steps of the functional core of the 30S ribosomal subunit. Associates with free 30S ribosomal subunits (but not with 30S subunits that are part of 70S ribosomes or polysomes). Required for efficient processing of 16S rRNA. May interact with the 5'-terminal helix region of 16S rRNA. This chain is Ribosome-binding factor A, found in Nitrosococcus oceani (strain ATCC 19707 / BCRC 17464 / JCM 30415 / NCIMB 11848 / C-107).